The following is a 164-amino-acid chain: CASP-like protein 1C1 (164 aa).

The Cytoplasmic portion of the chain corresponds to 1 to 15 (MGDVEIPPLVKQIVR). A helical transmembrane segment spans residues 16–36 (GLRGLAFLATILATSFMAASH). Residues 37–56 (ERAIFPFDYKADYTDLMLFK) are Extracellular-facing. The chain crosses the membrane as a helical span at residues 57–77 (AFLGANIAASLYSFFFVCLPP). The Cytoplasmic segment spans residues 78–83 (KSLLWR). Residues 84–104 (LAIVLDVIMFGLLVAMDSAAI) form a helical membrane-spanning segment. At 105-132 (AAAYLHKHGDSQAFWPPICSQVPTYCYR) the chain is on the extracellular side. Residues 133–153 (VILAISIGFGGVFMFLLIIII) form a helical membrane-spanning segment. Topologically, residues 154-164 (SISVILNPLLV) are cytoplasmic.

This sequence belongs to the Casparian strip membrane proteins (CASP) family. As to quaternary structure, homodimer and heterodimers.

The protein localises to the cell membrane. The sequence is that of CASP-like protein 1C1 from Populus trichocarpa (Western balsam poplar).